We begin with the raw amino-acid sequence, 314 residues long: E3 ubiquitin-protein ligase SINA-like 11 (314 aa).

Positions M1–T12 are enriched in polar residues. Residues M1 to R31 are disordered. Basic residues predominate over residues S13–K23. The segment at C43–D81 adopts an RING-type; degenerate zinc-finger fold. Positions V95–I280 are SBD. The SIAH-type zinc-finger motif lies at S98–L156. C103, C110, H122, C126, C133, C138, H150, and H155 together coordinate Zn(2+).

It belongs to the SINA (Seven in absentia) family.

It carries out the reaction S-ubiquitinyl-[E2 ubiquitin-conjugating enzyme]-L-cysteine + [acceptor protein]-L-lysine = [E2 ubiquitin-conjugating enzyme]-L-cysteine + N(6)-ubiquitinyl-[acceptor protein]-L-lysine.. It participates in protein modification; protein ubiquitination. In terms of biological role, E3 ubiquitin-protein ligase that mediates ubiquitination and subsequent proteasomal degradation of target proteins. E3 ubiquitin ligases accept ubiquitin from an E2 ubiquitin-conjugating enzyme in the form of a thioester and then directly transfers the ubiquitin to targeted substrates. It probably triggers the ubiquitin-mediated degradation of different substrates. The sequence is that of E3 ubiquitin-protein ligase SINA-like 11 from Arabidopsis thaliana (Mouse-ear cress).